Consider the following 88-residue polypeptide: Apolipoprotein C-I (88 aa).

An N-terminal signal peptide occupies residues 1–26; sequence MRLLLSLPVLLVALSVVLERPAPAQA.

The protein belongs to the apolipoprotein C1 family.

It is found in the secreted. In terms of biological role, inhibitor of lipoprotein binding to the low density lipoprotein (LDL) receptor, LDL receptor-related protein, and very low density lipoprotein (VLDL) receptor. Associates with high density lipoproteins (HDL) and the triacylglycerol-rich lipoproteins in the plasma and makes up about 10% of the protein of the VLDL and 2% of that of HDL. Appears to interfere directly with fatty acid uptake and is also the major plasma inhibitor of cholesteryl ester transfer protein (CETP). Binds free fatty acids and reduces their intracellular esterification. Modulates the interaction of APOE with beta-migrating VLDL and inhibits binding of beta-VLDL to the LDL receptor-related protein. The chain is Apolipoprotein C-I (APOC1) from Tupaia glis (Common tree shrew).